The following is a 231-amino-acid chain: LexA repressor (231 aa).

A DNA-binding region (H-T-H motif) is located at residues 26-46 (FDEMKLALDLRSKSGIHRLIT). Residues 79–98 (VGFQPRVIDGDRPDRPRPAN) form a disordered region. Positions 86–95 (IDGDRPDRPR) are enriched in basic and acidic residues. Catalysis depends on for autocatalytic cleavage activity residues Ser152 and Lys190.

It belongs to the peptidase S24 family. As to quaternary structure, homodimer.

The catalysed reaction is Hydrolysis of Ala-|-Gly bond in repressor LexA.. Its function is as follows. Represses a number of genes involved in the response to DNA damage (SOS response), including recA and lexA. In the presence of single-stranded DNA, RecA interacts with LexA causing an autocatalytic cleavage which disrupts the DNA-binding part of LexA, leading to derepression of the SOS regulon and eventually DNA repair. In Ruegeria pomeroyi (strain ATCC 700808 / DSM 15171 / DSS-3) (Silicibacter pomeroyi), this protein is LexA repressor.